The following is a 227-amino-acid chain: Small ribosomal subunit protein uS3 (227 aa).

The 70-residue stretch at Ile39 to Lys108 folds into the KH type-2 domain.

This sequence belongs to the universal ribosomal protein uS3 family. In terms of assembly, part of the 30S ribosomal subunit. Forms a tight complex with proteins S10 and S14.

In terms of biological role, binds the lower part of the 30S subunit head. Binds mRNA in the 70S ribosome, positioning it for translation. This Sulfurihydrogenibium sp. (strain YO3AOP1) protein is Small ribosomal subunit protein uS3.